The sequence spans 333 residues: Lipoyl synthase (333 aa).

[4Fe-4S] cluster contacts are provided by Cys56, Cys61, Cys67, Cys82, Cys86, Cys89, and Ser293. In terms of domain architecture, Radical SAM core spans Trp68 to Ser282. Positions Gln301–Trp333 are disordered. Low complexity predominate over residues Met314–Ser325.

This sequence belongs to the radical SAM superfamily. Lipoyl synthase family. Requires [4Fe-4S] cluster as cofactor.

It localises to the cytoplasm. The enzyme catalyses [[Fe-S] cluster scaffold protein carrying a second [4Fe-4S](2+) cluster] + N(6)-octanoyl-L-lysyl-[protein] + 2 oxidized [2Fe-2S]-[ferredoxin] + 2 S-adenosyl-L-methionine + 4 H(+) = [[Fe-S] cluster scaffold protein] + N(6)-[(R)-dihydrolipoyl]-L-lysyl-[protein] + 4 Fe(3+) + 2 hydrogen sulfide + 2 5'-deoxyadenosine + 2 L-methionine + 2 reduced [2Fe-2S]-[ferredoxin]. It participates in protein modification; protein lipoylation via endogenous pathway; protein N(6)-(lipoyl)lysine from octanoyl-[acyl-carrier-protein]: step 2/2. Functionally, catalyzes the radical-mediated insertion of two sulfur atoms into the C-6 and C-8 positions of the octanoyl moiety bound to the lipoyl domains of lipoate-dependent enzymes, thereby converting the octanoylated domains into lipoylated derivatives. The polypeptide is Lipoyl synthase (Frankia casuarinae (strain DSM 45818 / CECT 9043 / HFP020203 / CcI3)).